The following is an 87-amino-acid chain: Monogrin 1 (87 aa).

A BPTI/Kunitz inhibitor domain is found at cysteine 8–cysteine 62. 3 disulfides stabilise this stretch: cysteine 8/cysteine 62, cysteine 16/cysteine 42, and cysteine 35/cysteine 58. Residues arginine 17–aspartate 19 carry the Cell attachment site motif.

The N-terminus is blocked. In terms of tissue distribution, expressed in salivary glands.

It is found in the cytoplasmic vesicle. The protein localises to the secretory vesicle. The protein resides in the secreted. In terms of biological role, tick salivary platelet aggregation inhibitor that plays an important part in the anti-hemostatic strategy of ticks. Inhibits platelet aggregation induced by ADP (IC(50)~150 nM), collagen, and platelet activating factor (PAF). Acts by binding to platelet membrane glycoprotein IIb-IIIa (ITGA2B/ITGB3) in a metal ion dependent manner. Does not inhibit aggregation induced by ristocecin, an agonist that aggregates platelets independently from the glycoprotein IIb-IIIa (ITGA2B/ITGB3). In contrast to other tick platelet aggregation inhibitors, this protein does not protect ITGA2B/ITGB3 from dissociation under SDS condition, suggesting it may dissocate much faster than its orthologs. This is Monogrin 1 from Argas monolakensis (Mono lake bird tick).